A 102-amino-acid polypeptide reads, in one-letter code: C-X-C motif chemokine 10 (102 aa).

Residues 1-19 (MNKSGFLIFCLILLTLSQG) form the signal peptide. R24 carries the citrulline modification. 2 disulfide bridges follow: C28/C55 and C30/C72.

Belongs to the intercrine alpha (chemokine CxC) family. Monomer, dimer, and tetramer. Interacts with CXCR3 (via N-terminus).

The protein resides in the secreted. Pro-inflammatory cytokine that is involved in a wide variety of processes such as chemotaxis, differentiation, and activation of peripheral immune cells, regulation of cell growth, apoptosis and modulation of angiostatic effects. Plays thereby an important role during viral infections by stimulating the activation and migration of immune cells to the infected sites. Mechanistically, binding of CXCL10 to the CXCR3 receptor activates G protein-mediated signaling and results in downstream activation of phospholipase C-dependent pathway, an increase in intracellular calcium production and actin reorganization. In turn, recruitment of activated Th1 lymphocytes occurs at sites of inflammation. Activation of the CXCL10/CXCR3 axis also plays an important role in neurons in response to brain injury for activating microglia, the resident macrophage population of the central nervous system, and directing them to the lesion site. This recruitment is an essential element for neuronal reorganization. This chain is C-X-C motif chemokine 10 (CXCL10), found in Bos taurus (Bovine).